The following is a 118-amino-acid chain: Small ribosomal subunit protein uS13 (118 aa).

The disordered stretch occupies residues 94 to 118 (GLPVRGQRTKTNARTRKGPRKPIKK).

Belongs to the universal ribosomal protein uS13 family. In terms of assembly, part of the 30S ribosomal subunit. Forms a loose heterodimer with protein S19. Forms two bridges to the 50S subunit in the 70S ribosome.

Its function is as follows. Located at the top of the head of the 30S subunit, it contacts several helices of the 16S rRNA. In the 70S ribosome it contacts the 23S rRNA (bridge B1a) and protein L5 of the 50S subunit (bridge B1b), connecting the 2 subunits; these bridges are implicated in subunit movement. Contacts the tRNAs in the A and P-sites. The protein is Small ribosomal subunit protein uS13 of Shigella dysenteriae serotype 1 (strain Sd197).